Consider the following 294-residue polypeptide: 4-hydroxy-tetrahydrodipicolinate synthase (294 aa).

Pyruvate is bound at residue Thr44. The active-site Proton donor/acceptor is the Tyr132. Lys160 functions as the Schiff-base intermediate with substrate in the catalytic mechanism. Val202 contacts pyruvate.

This sequence belongs to the DapA family. In terms of assembly, homotetramer; dimer of dimers.

The protein localises to the cytoplasm. It carries out the reaction L-aspartate 4-semialdehyde + pyruvate = (2S,4S)-4-hydroxy-2,3,4,5-tetrahydrodipicolinate + H2O + H(+). Its pathway is amino-acid biosynthesis; L-lysine biosynthesis via DAP pathway; (S)-tetrahydrodipicolinate from L-aspartate: step 3/4. In terms of biological role, catalyzes the condensation of (S)-aspartate-beta-semialdehyde [(S)-ASA] and pyruvate to 4-hydroxy-tetrahydrodipicolinate (HTPA). The sequence is that of 4-hydroxy-tetrahydrodipicolinate synthase from Leptospira borgpetersenii serovar Hardjo-bovis (strain L550).